A 329-amino-acid chain; its full sequence is Acetoacetyl CoA synthase NphT7 (329 aa).

Residues C115, H256, and N286 contribute to the active site.

The protein belongs to the thiolase-like superfamily. FabH family. As to quaternary structure, homodimer.

The protein resides in the cytoplasm. It catalyses the reaction malonyl-CoA + acetyl-CoA + H(+) = acetoacetyl-CoA + CO2 + CoA. The protein operates within metabolic intermediate biosynthesis; (R)-mevalonate biosynthesis. Its function is as follows. Catalyzes the condensation of acetyl-CoA and malonyl-CoA to form acetoacetyl-CoA and CoA. Does not accept malonyl-[acyl-carrier-protein] as a substrate. Can also convert malonyl-CoA into acetyl-CoA via decarboxylation of malonyl-CoA. This Streptomyces sp. (strain CL190) protein is Acetoacetyl CoA synthase NphT7 (nphT7).